The chain runs to 292 residues: Short chain dehydrogenases/reductase notP' (292 aa).

The interval 1–25 is disordered; sequence MPQTSDGNVHAPQYREAKPSQGDPS. Residues leucine 48, aspartate 97, lysine 158, tyrosine 193, lysine 197, isoleucine 230, and threonine 232 each coordinate NADP(+). Tyrosine 193 (proton donor) is an active-site residue. Catalysis depends on lysine 197, which acts as the Lowers pKa of active site Tyr.

Belongs to the short-chain dehydrogenases/reductases (SDR) family.

Its function is as follows. Short chain dehydrogenases/reductase; part of the gene cluster that mediates the biosynthesis of notoamide, a fungal indole alkaloid that belongs to a family of natural products containing a characteristic bicyclo[2.2.2]diazaoctane core. The first step of notoamide biosynthesis involves coupling of L-proline and L-tryptophan by the bimodular NRPS notE', to produce cyclo-L-tryptophan-L-proline called brevianamide F. The reverse prenyltransferase notF' then acts as a deoxybrevianamide E synthase and converts brevianamide F to deoxybrevianamide E via reverse prenylation at C-2 of the indole ring leading to the bicyclo[2.2.2]diazaoctane core. Deoxybrevianamide E is further hydroxylated at C-6 of the indole ring, likely catalyzed by the cytochrome P450 monooxygenase notG', to yield 6-hydroxy-deoxybrevianamide E. 6-hydroxy-deoxybrevianamide E is a specific substrate of the prenyltransferase notC' for normal prenylation at C-7 to produce 6-hydroxy-7-prenyl-deoxybrevianamide, also called notoamide S. As the proposed pivotal branching point in notoamide biosynthesis, notoamide S can be diverted to notoamide E through an oxidative pyran ring closure putatively catalyzed by either notH' cytochrome P450 monooxygenase or the notD' FAD-linked oxidoreductase. This step would be followed by an indole 2,3-epoxidation-initiated pinacol-like rearrangement catalyzed by the notB' FAD-dependent monooxygenase leading to the formation of notoamide C and notoamide D. On the other hand notoamide S is converted to notoamide T by notH' (or notD'), a bifunctional oxidase that also functions as the intramolecular Diels-Alderase responsible for generation of (-)-notoamide T. To generate antipodal (+)-notoaminide T, notH (or notD) in Aspergillus strain MF297-2 is expected to catalyze a Diels-Alder reaction leading to the opposite stereochemistry. The remaining oxidoreductase notD' (or notH') likely catalyzes the oxidative pyran ring formation to yield (-)-stephacidin A. The FAD-dependent monooxygenase notI' is highly similar to notB' and is predicted to catalyze a similar conversion from (-)-stephacidin A to (+)-notoamide B via the 2,3-epoxidation of (-)-stephacidin A followed by a pinacol-type rearrangement. Finally, it remains unclear which enzyme could be responsible for the final hydroxylation steps leading to notoamide A and sclerotiamide. The function of notP' in the notoamide biosynthesis has not been determined yet. This is Short chain dehydrogenases/reductase notP' from Aspergillus versicolor.